The chain runs to 510 residues: Histidine ammonia-lyase (510 aa).

Positions 143–145 (ASG) form a cross-link, 5-imidazolinone (Ala-Gly). Ser-144 is modified (2,3-didehydroalanine (Ser)).

It belongs to the PAL/histidase family. Post-translationally, contains an active site 4-methylidene-imidazol-5-one (MIO), which is formed autocatalytically by cyclization and dehydration of residues Ala-Ser-Gly.

It localises to the cytoplasm. The catalysed reaction is L-histidine = trans-urocanate + NH4(+). It participates in amino-acid degradation; L-histidine degradation into L-glutamate; N-formimidoyl-L-glutamate from L-histidine: step 1/3. This Shewanella sediminis (strain HAW-EB3) protein is Histidine ammonia-lyase.